The chain runs to 557 residues: Warthog protein 4 (557 aa).

Positions 1–20 (MRFSLLALVLLSSSYKFTYG) are cleaved as a signal peptide. The interval 272–308 (QETNPQPPPPPGQQGGFVQPQGFQPQGGFQPQGFQPQ) is disordered. The segment covering 287–308 (GFVQPQGFQPQGGFQPQGFQPQ) has biased composition (low complexity).

Belongs to the hedgehog family. The C-terminal domain displays an autoproteolysis activity.

It is found in the secreted. It localises to the cell surface. The protein localises to the cell membrane. Its subcellular location is the extracellular space. In terms of biological role, intercellular signal essential for a variety of patterning events during development. The polypeptide is Warthog protein 4 (wrt-4) (Caenorhabditis elegans).